The primary structure comprises 99 residues: Large ribosomal subunit protein uL23 (99 aa).

It belongs to the universal ribosomal protein uL23 family. Part of the 50S ribosomal subunit. Contacts protein L29, and trigger factor when it is bound to the ribosome.

In terms of biological role, one of the early assembly proteins it binds 23S rRNA. One of the proteins that surrounds the polypeptide exit tunnel on the outside of the ribosome. Forms the main docking site for trigger factor binding to the ribosome. In Rhodopseudomonas palustris (strain BisB18), this protein is Large ribosomal subunit protein uL23.